A 544-amino-acid chain; its full sequence is Cytochrome P450 monooxygenase notG' (544 aa).

Positions 1–22 (MELPFSAMSLLYLLVGIAGVIS) are cleaved as a signal peptide. Transmembrane regions (helical) follow at residues 42–62 (WYTL…GLPL) and 66–86 (AKAT…SLLL). N-linked (GlcNAc...) asparagine glycosylation is found at asparagine 226 and asparagine 404. Position 487 (cysteine 487) interacts with heme.

The protein belongs to the cytochrome P450 family. The cofactor is heme.

It is found in the membrane. It participates in alkaloid biosynthesis. Cytochrome P450 monooxygenase; part of the gene cluster that mediates the biosynthesis of notoamide, a fungal indole alkaloid that belongs to a family of natural products containing a characteristic bicyclo[2.2.2]diazaoctane core. The first step of notoamide biosynthesis involves coupling of L-proline and L-tryptophan by the bimodular NRPS notE', to produce cyclo-L-tryptophan-L-proline called brevianamide F. The reverse prenyltransferase notF' then acts as a deoxybrevianamide E synthase and converts brevianamide F to deoxybrevianamide E via reverse prenylation at C-2 of the indole ring leading to the bicyclo[2.2.2]diazaoctane core. Deoxybrevianamide E is further hydroxylated at C-6 of the indole ring, likely catalyzed by the cytochrome P450 monooxygenase notG', to yield 6-hydroxy-deoxybrevianamide E. 6-hydroxy-deoxybrevianamide E is a specific substrate of the prenyltransferase notC' for normal prenylation at C-7 to produce 6-hydroxy-7-prenyl-deoxybrevianamide, also called notoamide S. As the proposed pivotal branching point in notoamide biosynthesis, notoamide S can be diverted to notoamide E through an oxidative pyran ring closure putatively catalyzed by either notH' cytochrome P450 monooxygenase or the notD' FAD-linked oxidoreductase. This step would be followed by an indole 2,3-epoxidation-initiated pinacol-like rearrangement catalyzed by the notB' FAD-dependent monooxygenase leading to the formation of notoamide C and notoamide D. On the other hand notoamide S is converted to notoamide T by notH' (or notD'), a bifunctional oxidase that also functions as the intramolecular Diels-Alderase responsible for generation of (-)-notoamide T. To generate antipodal (+)-notoaminide T, notH (or notD) in Aspergillus strain MF297-2 is expected to catalyze a Diels-Alder reaction leading to the opposite stereochemistry. The remaining oxidoreductase notD' (or notH') likely catalyzes the oxidative pyran ring formation to yield (-)-stephacidin A. The FAD-dependent monooxygenase notI' is highly similar to notB' and is predicted to catalyze a similar conversion from (-)-stephacidin A to (+)-notoamide B via the 2,3-epoxidation of (-)-stephacidin A followed by a pinacol-type rearrangement. Finally, it remains unclear which enzyme could be responsible for the final hydroxylation steps leading to notoamide A and sclerotiamide. This chain is Cytochrome P450 monooxygenase notG', found in Aspergillus versicolor.